Reading from the N-terminus, the 404-residue chain is Sialidase (404 aa).

Positions 1–27 (MKKFIKILKVLSMAIVLSACNINGIFA) are cleaved as a signal peptide. Position 55 (Arg55) interacts with substrate. Residue Asp80 is the Proton acceptor of the active site. 3 BNR repeats span residues 89 to 100 (AKSTDNGQTWDY), 158 to 169 (VYSDDNGETWSD), and 226 to 237 (IYSKDNGETWTM). Arg263 lines the substrate pocket. Residues 273 to 284 (YISYDMGSTWEV) form a BNR 4 repeat. The active-site Nucleophile is Tyr365.

This sequence belongs to the glycosyl hydrolase 33 family. In terms of processing, it is possible that the sialidase is cleaved in front of a cysteine within the leader peptide, forming a glyceride thioether bond which links the protein to the membrane. A second proteolytic cleavage releases the mature extracellular protein.

It localises to the secreted. It catalyses the reaction Hydrolysis of alpha-(2-&gt;3)-, alpha-(2-&gt;6)-, alpha-(2-&gt;8)- glycosidic linkages of terminal sialic acid residues in oligosaccharides, glycoproteins, glycolipids, colominic acid and synthetic substrates.. Sialidases have been suggested to be pathogenic factors in microbial infections. This chain is Sialidase, found in Paraclostridium sordellii (Clostridium sordellii).